Here is a 170-residue protein sequence, read N- to C-terminus: AP-5 complex subunit sigma-1 (170 aa).

As to quaternary structure, probably part of the adaptor protein complex 5 (AP-5) a tetramer composed of AP5B1, AP5M1, AP5S1 and AP5Z1. Interacts with ZFYVE26 and SPG11.

The protein localises to the cytoplasm. It is found in the cytosol. Its subcellular location is the late endosome membrane. It localises to the lysosome membrane. As part of AP-5, a probable fifth adaptor protein complex it may be involved in endosomal transport. This is AP-5 complex subunit sigma-1 (Ap5s1) from Mus musculus (Mouse).